A 387-amino-acid chain; its full sequence is Protein kinase ORF16 (387 aa).

Residues 82 to 381 form the Protein kinase domain; that stretch reads KKILSRVGPE…VTLMTELSLL (300 aa). K122 is an ATP binding site. D226 functions as the Proton acceptor in the catalytic mechanism.

This sequence belongs to the protein kinase superfamily. Ser/Thr protein kinase family.

It catalyses the reaction L-seryl-[protein] + ATP = O-phospho-L-seryl-[protein] + ADP + H(+). The enzyme catalyses L-threonyl-[protein] + ATP = O-phospho-L-threonyl-[protein] + ADP + H(+). This Ictalurid herpesvirus 1 (strain Auburn) (IcHV-1) protein is Protein kinase ORF16 (ORF16).